A 628-amino-acid polypeptide reads, in one-letter code: Kinesin-like protein KIN-10B (628 aa).

One can recognise a Kinesin motor domain in the interval Asn20–Ile340. Gly114–Thr121 lines the ATP pocket. A disordered region spans residues Ser496 to Pro519. Polar residues predominate over residues Ile498–Gly509.

Belongs to the TRAFAC class myosin-kinesin ATPase superfamily. Kinesin family. KIN-10 subfamily.

The chain is Kinesin-like protein KIN-10B from Arabidopsis thaliana (Mouse-ear cress).